We begin with the raw amino-acid sequence, 316 residues long: Serpentine receptor class delta-45 (316 aa).

7 helical membrane passes run 8 to 28, 42 to 62, 91 to 111, 128 to 148, 184 to 204, 234 to 254, and 266 to 286; these read VFYPMFFILVIPSLILLIFII, ILLVTCISQIVAVTTNCLIQI, YFLTQTAVVISNVLIFLTIYL, VTFFILSPIFIALGAQTSLIL, IIITFVITGTILILPAVGLLL, LQVFLPLICYIPVFGSFLVLA, and FFSVLVMLPMLFDPYIILYSV.

It belongs to the nematode receptor-like protein srd family.

It is found in the membrane. This is Serpentine receptor class delta-45 (srd-45) from Caenorhabditis elegans.